We begin with the raw amino-acid sequence, 241 residues long: LexA repressor (241 aa).

The segment at residues 41-61 is a DNA-binding region (H-T-H motif); the sequence is FREIGNAAGLKSPSSVKHQLQ. Residues Ser165 and Lys202 each act as for autocatalytic cleavage activity in the active site.

The protein belongs to the peptidase S24 family. In terms of assembly, homodimer.

The enzyme catalyses Hydrolysis of Ala-|-Gly bond in repressor LexA.. Its function is as follows. Represses a number of genes involved in the response to DNA damage (SOS response), including recA and lexA. In the presence of single-stranded DNA, RecA interacts with LexA causing an autocatalytic cleavage which disrupts the DNA-binding part of LexA, leading to derepression of the SOS regulon and eventually DNA repair. In Bifidobacterium longum (strain DJO10A), this protein is LexA repressor.